The sequence spans 204 residues: Large ribosomal subunit protein eL15z (204 aa).

This sequence belongs to the eukaryotic ribosomal protein eL15 family.

The chain is Large ribosomal subunit protein eL15z (SB61) from Picea mariana (Black spruce).